Reading from the N-terminus, the 404-residue chain is Hemocyanin, beta-C chain unit G (404 aa).

N38 is a glycosylation site (N-linked (GlcNAc...) asparagine). H50 contributes to the Cu cation binding site. A disulfide bond links C56 and C65. N-linked (GlcNAc...) asparagine glycosylation occurs at N60. H61 lines the Cu cation pocket. The segment at residues 66–68 (CIH) is a cross-link (2'-(S-cysteinyl)-histidine (Cys-His)). Cu cation contacts are provided by H77, H176, H180, and H207. 2 disulfide bridges follow: C166–C233 and C320–C326. The N-linked (GlcNAc...) asparagine glycan is linked to N378.

This sequence belongs to the tyrosinase family. Hemocyanin subfamily. In terms of assembly, decamers of large identical subunits (450 kDa), each containing 8 globular oxygen-binding functional units. Cu(2+) is required as a cofactor.

Its function is as follows. Hemocyanins are copper-containing oxygen carriers occurring freely dissolved in the hemolymph of many mollusks and arthropods. The protein is Hemocyanin, beta-C chain unit G of Helix pomatia (Roman snail).